A 329-amino-acid polypeptide reads, in one-letter code: Short-chain dehydrogenase/reductase prx4 (329 aa).

The signal sequence occupies residues 1–21 (MIPRWQPASIALLLHLDTLRC). The NADP(+) site is built by Ser58, Ile60, and Asn81. Asn91 carries an N-linked (GlcNAc...) asparagine glycan. The NADP(+) site is built by Asp98, Asn121, Lys161, Tyr194, Lys198, and Thr229. Tyr194 acts as the Proton acceptor in catalysis. Residue Lys198 is the Lowers pKa of active site Tyr of the active site. A helical membrane pass occupies residues 238–258 (GPLMAAGLPVSSAHMVGLAVV).

It belongs to the short-chain dehydrogenases/reductases (SDR) family.

It localises to the membrane. The protein operates within sesquiterpene biosynthesis. Its function is as follows. Short-chain dehydrogenase/reductase; part of the gene cluster that mediates the biosynthesis of PR-toxin, a bicyclic sesquiterpene belonging to the eremophilane class and acting as a mycotoxin. The first step of the pathway is catalyzed by the aristolochene synthase which performs the cyclization of trans,trans-farnesyl diphosphate (FPP) to the bicyclic sesquiterpene aristolochene. Following the formation of aristolochene, the non-oxygenated aristolochene is converted to the trioxygenated intermediate eremofortin B, via 7-epi-neopetasone. This conversion appears to involve three enzymes, a hydroxysterol oxidase-like enzyme, the quinone-oxidase prx3 that forms the quinone-type-structure in the bicyclic nucleus of aristolochene with the C8-oxo group and the C-3 hydroxyl group, and the P450 monooxygenase prx9 that introduces the epoxide at the double bond between carbons 1 and 2. No monoxy or dioxy-intermediates have been reported to be released to the broth, so these three early oxidative reactions may be coupled together. Eremofortin B is further oxidized by another P450 monooxygenase, that introduces a second epoxide between carbons 7 and 11 prior to acetylation to eremofortin A by the acetyltransferase prx11. The second epoxidation may be performed by a second P450 monooxygenase. After the acetylation step, eremofortin A is converted to eremofortin C and then to PR-toxin. First the conversion of eremofortin A to eremofortin C proceeds by oxidation of the side chain of the molecule at C-12 and is catalyzed by the short-chain oxidoreductase prx1. The cytochrome P450 monooxygenase prx8 also plays a role in this step. The primary alcohol formed at C-12 is finally oxidized by the short-chain alcohol dehydrogenase prx4 that forms PR-toxin. In Penicillium rubens (strain ATCC 28089 / DSM 1075 / NRRL 1951 / Wisconsin 54-1255) (Penicillium chrysogenum), this protein is Short-chain dehydrogenase/reductase prx4.